The chain runs to 431 residues: Adenylosuccinate synthetase (431 aa).

GTP contacts are provided by residues 12–18 (GDEGKGK) and 40–42 (GHT). Asp13 (proton acceptor) is an active-site residue. Mg(2+) contacts are provided by Asp13 and Gly40. Residues 13 to 16 (DEGK), 38 to 41 (NAGH), Thr129, Arg143, Gln224, Thr239, and Arg303 contribute to the IMP site. His41 serves as the catalytic Proton donor. 299 to 305 (VTTGRAR) is a binding site for substrate. GTP is bound by residues Arg305, 331–333 (KLD), and 413–415 (GVG).

The protein belongs to the adenylosuccinate synthetase family. Homodimer. Mg(2+) serves as cofactor.

It localises to the cytoplasm. The catalysed reaction is IMP + L-aspartate + GTP = N(6)-(1,2-dicarboxyethyl)-AMP + GDP + phosphate + 2 H(+). The protein operates within purine metabolism; AMP biosynthesis via de novo pathway; AMP from IMP: step 1/2. Plays an important role in the de novo pathway of purine nucleotide biosynthesis. Catalyzes the first committed step in the biosynthesis of AMP from IMP. This chain is Adenylosuccinate synthetase, found in Mycolicibacterium vanbaalenii (strain DSM 7251 / JCM 13017 / BCRC 16820 / KCTC 9966 / NRRL B-24157 / PYR-1) (Mycobacterium vanbaalenii).